The sequence spans 203 residues: MAKAYDHLFKLLLIGDSGVGKTCLIIRFAEDNFNNTYISTIGIDFKIRTVEIEGKRIKLQVWDTAGQERFKTITTAYYRGAMGIILVYDITDEKSFENIQNWMKSIKENASAGVERLLLGNKCDMEAKRKVLKEQADKLAREHGIRFFETSAKSSMNVDEAFNSLARDILLKSGGRRSGNHSKPSSTDLKPSDKKNTNKCSLG.

7 residues coordinate GTP: Ser17, Gly18, Gly20, Lys21, Thr22, Cys23, and Thr40. Thr22 is a Mg(2+) binding site. The short motif at 31–45 (DNFNNTYISTIGIDF) is the Switch 1 element. Thr40 serves as a coordination point for Mg(2+). Glycyl lysine isopeptide (Lys-Gly) (interchain with G-Cter in ubiquitin) cross-links involve residues Lys46 and Lys58. Position 63 (Asp63) interacts with Mg(2+). Positions 63–80 (DTAGQERFKTITTAYYRG) match the Switch 2 motif. GTP is bound by residues Gly66, Asn121, Lys122, Asp124, Ala152, and Lys153. The tract at residues 173–203 (SGGRRSGNHSKPSSTDLKPSDKKNTNKCSLG) is disordered. Residue Ser178 is modified to Phosphoserine. Residue Cys200 is modified to Cysteine methyl ester. Cys200 carries the S-geranylgeranyl cysteine lipid modification. Residues 201–203 (SLG) constitute a propeptide, removed in mature form.

This sequence belongs to the small GTPase superfamily. Rab family. In terms of assembly, interacts (GTP-bound form) with MICALL2; competes with RAB8A and is involved in tight junctions assembly. Interacts (GTP-bound form) with MICALL1. Interacts (GTP-bound form) with MICAL1, MICAL3, MICALCL, EHBP1 and EHBP1L1; ternary complexes of RAB8A, RAB13 and either MICAL1 or EHBP1L1 are possible. Interacts with PRKACA; downstream effector of RAB13 involved in tight junction assembly. Interacts with GRB2; may recruit RAB13 to the leading edge of migrating endothelial cells where it can activate RHOA. Interacts (isoprenylated form) with PDE6D; dissociates RAB13 from membranes. Interacts with BICDL2/BICDR2. Interacts with LEPROT and LEPROTL1. It depends on Mg(2+) as a cofactor. Post-translationally, ubiquitinated via 'Lys-11'-linked ubiquitination on Lys-46 and Lys-58; impairing the recruitment of guanosine diphosphate (GDP) dissociation inhibitor 1/GDI1.

The protein resides in the cell membrane. Its subcellular location is the cytoplasmic vesicle membrane. The protein localises to the cell junction. It is found in the tight junction. It localises to the golgi apparatus. The protein resides in the trans-Golgi network membrane. Its subcellular location is the recycling endosome membrane. The protein localises to the cell projection. It is found in the lamellipodium. The catalysed reaction is GTP + H2O = GDP + phosphate + H(+). With respect to regulation, regulated by guanine nucleotide exchange factors (GEFs) including DENND1C, which promote the exchange of bound GDP for free GTP. Regulated by GTPase activating proteins (GAPs) which increase the GTP hydrolysis activity. Inhibited by GDP dissociation inhibitors (GDIs). Activated in response to insulin. The small GTPases Rab are key regulators of intracellular membrane trafficking, from the formation of transport vesicles to their fusion with membranes. Rabs cycle between an inactive GDP-bound form and an active GTP-bound form that is able to recruit to membranes different sets of downstream effectors directly responsible for vesicle formation, movement, tethering and fusion. RAB13 is involved in endocytic recycling and regulates the transport to the plasma membrane of transmembrane proteins like the tight junction protein OCLN/occludin. Thereby, it regulates the assembly and the activity of tight junctions. Moreover, it may also regulate tight junction assembly by activating the PKA signaling pathway and by reorganizing the actin cytoskeleton through the activation of the downstream effectors PRKACA and MICALL2 respectively. Through its role in tight junction assembly, may play a role in the establishment of Sertoli cell barrier. Plays also a role in angiogenesis through regulation of endothelial cells chemotaxis. Also involved in neurite outgrowth. Has also been proposed to play a role in post-Golgi membrane trafficking from the TGN to the recycling endosome. Finally, it has been involved in insulin-induced transport to the plasma membrane of the glucose transporter GLUT4 and therefore may play a role in glucose homeostasis. The polypeptide is Ras-related protein Rab-13 (RAB13) (Mesocricetus auratus (Golden hamster)).